The primary structure comprises 100 residues: Urease subunit gamma (100 aa).

It belongs to the urease gamma subunit family. Heterotrimer of UreA (gamma), UreB (beta) and UreC (alpha) subunits. Three heterotrimers associate to form the active enzyme.

It localises to the cytoplasm. The catalysed reaction is urea + 2 H2O + H(+) = hydrogencarbonate + 2 NH4(+). It participates in nitrogen metabolism; urea degradation; CO(2) and NH(3) from urea (urease route): step 1/1. This is Urease subunit gamma from Bordetella pertussis (strain Tohama I / ATCC BAA-589 / NCTC 13251).